Here is a 262-residue protein sequence, read N- to C-terminus: Ribose-5-phosphate isomerase A (262 aa).

Substrate contacts are provided by residues T33–T36, D89–D92, and K102–G105. E111 functions as the Proton acceptor in the catalytic mechanism. Residue K129 participates in substrate binding.

It belongs to the ribose 5-phosphate isomerase family. In terms of assembly, homodimer.

It carries out the reaction aldehydo-D-ribose 5-phosphate = D-ribulose 5-phosphate. It functions in the pathway carbohydrate degradation; pentose phosphate pathway; D-ribose 5-phosphate from D-ribulose 5-phosphate (non-oxidative stage): step 1/1. Its function is as follows. Catalyzes the reversible conversion of ribose-5-phosphate to ribulose 5-phosphate. This is Ribose-5-phosphate isomerase A from Jannaschia sp. (strain CCS1).